The following is a 161-amino-acid chain: Phosphopantetheine adenylyltransferase (161 aa).

Position 9 (serine 9) interacts with substrate. Residues 9–10 and histidine 17 each bind ATP; that span reads SF. 3 residues coordinate substrate: lysine 41, leucine 73, and lysine 87. ATP is bound by residues 88 to 90, glutamate 98, and 122 to 128; these read GLR and FSFLSSS.

The protein belongs to the bacterial CoaD family. In terms of assembly, homohexamer. The cofactor is Mg(2+).

The protein resides in the cytoplasm. It catalyses the reaction (R)-4'-phosphopantetheine + ATP + H(+) = 3'-dephospho-CoA + diphosphate. It participates in cofactor biosynthesis; coenzyme A biosynthesis; CoA from (R)-pantothenate: step 4/5. Reversibly transfers an adenylyl group from ATP to 4'-phosphopantetheine, yielding dephospho-CoA (dPCoA) and pyrophosphate. In Nocardia farcinica (strain IFM 10152), this protein is Phosphopantetheine adenylyltransferase.